The sequence spans 106 residues: Non-histone chromosomal protein 6 (106 aa).

The segment covering 1–11 (MPKANPTRKTK) has biased composition (basic residues). 2 disordered regions span residues 1-33 (MPKA…GLSA) and 60-106 (MLGE…EESS). Basic and acidic residues-rich tracts occupy residues 12–26 (ATRE…DPNA) and 61–93 (LGEK…EKAA). The segment at residues 27–95 (PKRGLSAYMF…RYEDEKAAYK (69 aa)) is a DNA-binding region (HMG box).

This sequence belongs to the NHP6 family. As to quaternary structure, weakly associates with the stable spt16-pob3 heterodimer to form the FACT complex.

It localises to the nucleus. The protein localises to the chromosome. Its function is as follows. DNA-binding protein that induces severe bending of DNA. Required for DNA-binding by the FACT complex, a general chromatin factor that acts to reorganize nucleosomes. The FACT complex is involved in multiple processes that require DNA as a template such as mRNA elongation, DNA replication and DNA repair. Also augments the fidelity of transcription by RNA polymerase III independently of any role in the FACT complex. The protein is Non-histone chromosomal protein 6 (nhp6) of Emericella nidulans (strain FGSC A4 / ATCC 38163 / CBS 112.46 / NRRL 194 / M139) (Aspergillus nidulans).